Reading from the N-terminus, the 349-residue chain is ATP phosphoribosyltransferase regulatory subunit (349 aa).

The interval 325–349 (ANGRGRGVRPRRASARGGRAGTRPR) is disordered. Over residues 339 to 349 (ARGGRAGTRPR) the composition is skewed to low complexity.

The protein belongs to the class-II aminoacyl-tRNA synthetase family. HisZ subfamily. Heteromultimer composed of HisG and HisZ subunits.

The protein localises to the cytoplasm. Its pathway is amino-acid biosynthesis; L-histidine biosynthesis; L-histidine from 5-phospho-alpha-D-ribose 1-diphosphate: step 1/9. In terms of biological role, required for the first step of histidine biosynthesis. May allow the feedback regulation of ATP phosphoribosyltransferase activity by histidine. This Anaeromyxobacter dehalogenans (strain 2CP-C) protein is ATP phosphoribosyltransferase regulatory subunit.